The following is a 650-amino-acid chain: DNA gyrase subunit B (650 aa).

The 115-residue stretch at asparagine 429 to proline 543 folds into the Toprim domain. Residues glutamate 435, aspartate 508, and aspartate 510 each contribute to the Mg(2+) site.

It belongs to the type II topoisomerase GyrB family. In terms of assembly, heterotetramer, composed of two GyrA and two GyrB chains. In the heterotetramer, GyrA contains the active site tyrosine that forms a transient covalent intermediate with DNA, while GyrB binds cofactors and catalyzes ATP hydrolysis. Mg(2+) is required as a cofactor. Requires Mn(2+) as cofactor. It depends on Ca(2+) as a cofactor.

It is found in the cytoplasm. It carries out the reaction ATP-dependent breakage, passage and rejoining of double-stranded DNA.. Functionally, a type II topoisomerase that negatively supercoils closed circular double-stranded (ds) DNA in an ATP-dependent manner to modulate DNA topology and maintain chromosomes in an underwound state. Negative supercoiling favors strand separation, and DNA replication, transcription, recombination and repair, all of which involve strand separation. Also able to catalyze the interconversion of other topological isomers of dsDNA rings, including catenanes and knotted rings. Type II topoisomerases break and join 2 DNA strands simultaneously in an ATP-dependent manner. This chain is DNA gyrase subunit B, found in Streptococcus pyogenes serotype M1.